The sequence spans 232 residues: MVKIVKRIKKIREGINFNELYTLTDAVSMVKERAVAKFDETIEISMNLGVDPRHADQMVRGVAHLPNGTGKNIRVAVFARGDKAEEAKAAGADIVGAEDLFETVNGGTINFDRCIATPDMMPLVGRLGKVLGPRSLMPNPKVGTVTTDIAGAVKASKGGAVEFRVEKAGIVHAGVGKASFGAEQLIENIKTFVSAVIKAKPQGAKSEYIKRVAVSSTMGIGIKVDLVTIRSE.

It belongs to the universal ribosomal protein uL1 family. Part of the 50S ribosomal subunit.

Binds directly to 23S rRNA. The L1 stalk is quite mobile in the ribosome, and is involved in E site tRNA release. Functionally, protein L1 is also a translational repressor protein, it controls the translation of the L11 operon by binding to its mRNA. The protein is Large ribosomal subunit protein uL1 of Bartonella bacilliformis (strain ATCC 35685 / KC583 / Herrer 020/F12,63).